The sequence spans 344 residues: 2,3,4,5-tetrahydropyridine-2,6-dicarboxylate N-succinyltransferase (344 aa).

Glu-205 is a Mg(2+) binding site. Glu-221 serves as the catalytic Acyl-anhydride intermediate. Residues Arg-223, Gly-238, Ser-241, Ala-264, 279-280 (EA), Gly-287, Lys-304, and 317-320 (RRNS) each bind succinyl-CoA.

This sequence belongs to the type 2 tetrahydrodipicolinate N-succinyltransferase family. In terms of assembly, homotrimer.

It localises to the cytoplasm. It carries out the reaction (S)-2,3,4,5-tetrahydrodipicolinate + succinyl-CoA + H2O = (S)-2-succinylamino-6-oxoheptanedioate + CoA. Its pathway is amino-acid biosynthesis; L-lysine biosynthesis via DAP pathway; LL-2,6-diaminopimelate from (S)-tetrahydrodipicolinate (succinylase route): step 1/3. In terms of biological role, catalyzes the conversion of the cyclic tetrahydrodipicolinate (THDP) into the acyclic N-succinyl-L-2-amino-6-oxopimelate using succinyl-CoA. The chain is 2,3,4,5-tetrahydropyridine-2,6-dicarboxylate N-succinyltransferase from Pseudomonas putida (strain ATCC 47054 / DSM 6125 / CFBP 8728 / NCIMB 11950 / KT2440).